Consider the following 170-residue polypeptide: Peptide methionine sulfoxide reductase MsrA (170 aa).

The active site involves Cys-14.

It belongs to the MsrA Met sulfoxide reductase family.

The catalysed reaction is L-methionyl-[protein] + [thioredoxin]-disulfide + H2O = L-methionyl-(S)-S-oxide-[protein] + [thioredoxin]-dithiol. It catalyses the reaction [thioredoxin]-disulfide + L-methionine + H2O = L-methionine (S)-S-oxide + [thioredoxin]-dithiol. Has an important function as a repair enzyme for proteins that have been inactivated by oxidation. Catalyzes the reversible oxidation-reduction of methionine sulfoxide in proteins to methionine. The protein is Peptide methionine sulfoxide reductase MsrA of Streptomyces avermitilis (strain ATCC 31267 / DSM 46492 / JCM 5070 / NBRC 14893 / NCIMB 12804 / NRRL 8165 / MA-4680).